The chain runs to 547 residues: Probable ATP-dependent RNA helicase DDX56 (547 aa).

The Q motif signature appears at 7 to 35 (LGFEHMGLDPRLLQAVTDLGWSRPTLIQE). The Helicase ATP-binding domain maps to 38–218 (IPLALEGKDL…ELILHNPVTL (181 aa)). Residue 51–58 (ARTGSGKT) coordinates ATP. Position 126 is a phosphoserine (Ser126). The residue at position 141 (Thr141) is a Phosphothreonine. The DEAD box motif lies at 166–169 (DEAD). The Helicase C-terminal domain occupies 230–424 (QLQQFQVVCE…PYQFRMEEIE (195 aa)). 2 stretches are compositionally biased toward basic residues: residues 506–525 (RPHKKRKKLSSSCRKAKRAK) and 532–547 (SFKHKGKKFRPTAKPS). The disordered stretch occupies residues 506 to 547 (RPHKKRKKLSSSCRKAKRAKSQNPLRSFKHKGKKFRPTAKPS). Residue Ser532 is modified to Phosphoserine.

This sequence belongs to the DEAD box helicase family. DDX56/DBP9 subfamily. As to quaternary structure, may form homooligomeric complexes. Interacts with IRF3. Interacts with OCT4 and POU5F1. In terms of assembly, (Microbial infection) Interacts with West Nile virus capsid protein C. (Microbial infection) Interacts with foot-and-mouth disease virus protein 3A; this interaction leads to inhibition of type I interferon production. As to quaternary structure, (Microbial infection) Interacts with EMCV protein 3C; this interaction leads to inhibition of type I interferon production. As to expression, detected in heart, brain, liver, pancreas, placenta and lung.

It is found in the nucleus. The protein resides in the nucleolus. The enzyme catalyses ATP + H2O = ADP + phosphate + H(+). Functionally, nucleolar RNA helicase that plays a role in various biological processes including innate immunity, ribosome biogenesis or nucleolus organization. Plays an essential role in maintaining nucleolar integrity in planarian stem cells. Maintains embryonic stem cells proliferation by conventional regulation of ribosome assembly and interaction with OCT4 and POU5F1 complex. Regulates antiviral innate immunity by inhibiting the virus-triggered signaling nuclear translocation of IRF3. Mechanistically, acts by disrupting the interaction between IRF3 and importin IPO5. May play a role in later stages of the processing of the pre-ribosomal particles leading to mature 60S ribosomal subunits. Has intrinsic ATPase activity. Its function is as follows. (Microbial infection) Helicase activity is important for packaging viral RNA into virions during West Nile virus infection. In terms of biological role, (Microbial infection) Plays a positive role in foot-and-mouth disease virus replication by inhibiting the phosphorylation of IRF3 leading to inhibition of type I interferon. (Microbial infection) Plays a positive role in EMCV replication by interrupting IRF3 phosphorylation and its nucleus translocation. The polypeptide is Probable ATP-dependent RNA helicase DDX56 (DDX56) (Homo sapiens (Human)).